Consider the following 72-residue polypeptide: UPF0729 protein C18orf32 homolog (72 aa).

Residues 1 to 33 (MVCIPCIVIPVLLWIFKKFLEPYIYPVVSRIWP) are necessary for its localzation to the endoplasmic reticulum and lipid droplets. A disordered region spans residues 36–72 (AVQQSGDKNMSKVDCKGAGTNGLPTKGPTEVSDKKKD).

It belongs to the UPF0729 family. In terms of assembly, interacts with DERL1 and AMFR. In terms of processing, undergoes ER-associated degradation (ERAD).

It localises to the endoplasmic reticulum. It is found in the lipid droplet. Functionally, may activate the NF-kappa-B signaling pathway. This Mus musculus (Mouse) protein is UPF0729 protein C18orf32 homolog.